The chain runs to 61 residues: DNA gyrase inhibitor YacG (61 aa).

Zn(2+) contacts are provided by Cys14, Cys17, Cys29, and Cys33.

The protein belongs to the DNA gyrase inhibitor YacG family. Interacts with GyrB. It depends on Zn(2+) as a cofactor.

Inhibits all the catalytic activities of DNA gyrase by preventing its interaction with DNA. Acts by binding directly to the C-terminal domain of GyrB, which probably disrupts DNA binding by the gyrase. The sequence is that of DNA gyrase inhibitor YacG from Zymomonas mobilis subsp. mobilis (strain ATCC 31821 / ZM4 / CP4).